Consider the following 32-residue polypeptide: Protamine S4 (32 aa).

Residues 1–32 form a disordered region; sequence GCKKRKARKRPKCKKARKRPKCKRRKVAKKKC.

In terms of tissue distribution, testis.

The protein localises to the nucleus. It is found in the chromosome. In terms of biological role, protamines substitute for histones in the chromatin of sperm during the haploid phase of spermatogenesis. They compact sperm DNA into a highly condensed, stable and inactive complex. The polypeptide is Protamine S4 (Scyliorhinus canicula (Small-spotted catshark)).